Consider the following 39-residue polypeptide: Phospholipase A2 (39 aa).

Positions 10, 12, and 14 each coordinate Ca(2+). Cysteine 11 and cysteine 33 are disulfide-bonded. Histidine 36 is an active-site residue. Aspartate 37 serves as a coordination point for Ca(2+).

Ca(2+) serves as cofactor. Expressed uniformly in tentacles (at protein level).

It is found in the secreted. Its subcellular location is the nematocyst. The enzyme catalyses a 1,2-diacyl-sn-glycero-3-phosphocholine + H2O = a 1-acyl-sn-glycero-3-phosphocholine + a fatty acid + H(+). Its activity is regulated as follows. Inhibited by morin and p-BPB. Functionally, PA2 catalyzes the calcium-dependent hydrolysis of the 2-acyl groups in 3-sn-phosphoglycerides. Induces insulin secretion in isolated rat islets under high glucose concentration conditions, but not under low glucose concentration conditions. Increases perfusion pressure, renal vascular resistance, urinary flow, glomerular filtration rate, and potassium, sodium, and chloride excretion levels in rat kidney. Does not increase perfusion pressure in the rat mesenteric vascular bed. The chain is Phospholipase A2 from Bunodosoma caissarum (Sea anemone).